The sequence spans 123 residues: UPF0342 protein LAR_1202 (123 aa).

It belongs to the UPF0342 family.

This chain is UPF0342 protein LAR_1202, found in Limosilactobacillus reuteri subsp. reuteri (strain JCM 1112) (Lactobacillus reuteri).